The following is a 1479-amino-acid chain: Chromosome partition protein MukB (1479 aa).

Residue 34-41 (GGNGAGKS) participates in ATP binding. Coiled-coil stretches lie at residues 138–163 (ETLN…MEGV) and 331–664 (QAAS…RLSQ). Residues 665–782 (PGGSEDPRLN…ALPLFGRAAR (118 aa)) are flexible hinge. 2 coiled-coil regions span residues 831–1112 (DDPE…TAKA) and 1206–1257 (VEAI…MLNQ).

The protein belongs to the SMC family. MukB subfamily. In terms of assembly, homodimerization via its hinge domain. Binds to DNA via its C-terminal region. Interacts, and probably forms a ternary complex, with MukE and MukF via its C-terminal region. The complex formation is stimulated by calcium or magnesium. Interacts with tubulin-related protein FtsZ.

Its subcellular location is the cytoplasm. The protein localises to the nucleoid. Its function is as follows. Plays a central role in chromosome condensation, segregation and cell cycle progression. Functions as a homodimer, which is essential for chromosome partition. Involved in negative DNA supercoiling in vivo, and by this means organize and compact chromosomes. May achieve or facilitate chromosome segregation by condensation DNA from both sides of a centrally located replisome during cell division. The sequence is that of Chromosome partition protein MukB from Klebsiella pneumoniae.